A 334-amino-acid chain; its full sequence is Transcription initiation factor IIB (334 aa).

The TFIIB-type zinc-finger motif lies at 34–65; it reads EELVCPMCDSKNIIKDYEKAEIVCEDCGCVLQ. Zn(2+)-binding residues include cysteine 38, cysteine 41, cysteine 57, and cysteine 60. Repeat copies occupy residues 151 to 234 and 245 to 326.

It belongs to the TFIIB family.

Stabilizes TBP binding to an archaeal box-A promoter. Also responsible for recruiting RNA polymerase II to the pre-initiation complex (DNA-TBP-TFIIB). This is Transcription initiation factor IIB from Methanococcus aeolicus (strain ATCC BAA-1280 / DSM 17508 / OCM 812 / Nankai-3).